The sequence spans 94 residues: Co-chaperonin GroES (94 aa).

It belongs to the GroES chaperonin family. In terms of assembly, heptamer of 7 subunits arranged in a ring. Interacts with the chaperonin GroEL.

It localises to the cytoplasm. Together with the chaperonin GroEL, plays an essential role in assisting protein folding. The GroEL-GroES system forms a nano-cage that allows encapsulation of the non-native substrate proteins and provides a physical environment optimized to promote and accelerate protein folding. GroES binds to the apical surface of the GroEL ring, thereby capping the opening of the GroEL channel. This is Co-chaperonin GroES from Clostridium botulinum.